The following is a 112-amino-acid chain: FSPDCTWTIRNSGISQPVAIVSIEEVQFGYCRGYIKVFDGSGAQIFTREGCHENHSSNAFLEIAFQESQNVTIQVSLQNNQSYARVGYGILEDDLESASLLPAWNVAIENKT.

In terms of tissue distribution, component of the acid-insoluble and acid-soluble organic matrix of the aragonitic skeleton (at protein level).

It is found in the secreted. This is MAM and fibronectin type III domain-containing protein 2 from Acropora millepora (Staghorn coral).